A 272-amino-acid polypeptide reads, in one-letter code: Ribosomal RNA small subunit methyltransferase A (272 aa).

S-adenosyl-L-methionine-binding residues include N18, L20, G45, E66, D91, and N113.

This sequence belongs to the class I-like SAM-binding methyltransferase superfamily. rRNA adenine N(6)-methyltransferase family. RsmA subfamily.

The protein localises to the cytoplasm. It catalyses the reaction adenosine(1518)/adenosine(1519) in 16S rRNA + 4 S-adenosyl-L-methionine = N(6)-dimethyladenosine(1518)/N(6)-dimethyladenosine(1519) in 16S rRNA + 4 S-adenosyl-L-homocysteine + 4 H(+). Specifically dimethylates two adjacent adenosines (A1518 and A1519) in the loop of a conserved hairpin near the 3'-end of 16S rRNA in the 30S particle. May play a critical role in biogenesis of 30S subunits. The sequence is that of Ribosomal RNA small subunit methyltransferase A from Serratia proteamaculans (strain 568).